Here is a 105-residue protein sequence, read N- to C-terminus: Large ribosomal subunit protein uL24 (105 aa).

It belongs to the universal ribosomal protein uL24 family. As to quaternary structure, part of the 50S ribosomal subunit.

Functionally, one of two assembly initiator proteins, it binds directly to the 5'-end of the 23S rRNA, where it nucleates assembly of the 50S subunit. Its function is as follows. One of the proteins that surrounds the polypeptide exit tunnel on the outside of the subunit. The polypeptide is Large ribosomal subunit protein uL24 (Sphingopyxis alaskensis (strain DSM 13593 / LMG 18877 / RB2256) (Sphingomonas alaskensis)).